A 96-amino-acid polypeptide reads, in one-letter code: Large ribosomal subunit protein uL23 (96 aa).

It belongs to the universal ribosomal protein uL23 family. In terms of assembly, part of the 50S ribosomal subunit. Contacts protein L29, and trigger factor when it is bound to the ribosome.

Its function is as follows. One of the early assembly proteins it binds 23S rRNA. One of the proteins that surrounds the polypeptide exit tunnel on the outside of the ribosome. Forms the main docking site for trigger factor binding to the ribosome. This Nitratidesulfovibrio vulgaris (strain ATCC 29579 / DSM 644 / CCUG 34227 / NCIMB 8303 / VKM B-1760 / Hildenborough) (Desulfovibrio vulgaris) protein is Large ribosomal subunit protein uL23.